Here is a 786-residue protein sequence, read N- to C-terminus: Cyclin-F (786 aa).

The Nuclear localization signal 1 motif lies at lysine 20 to arginine 28. The F-box domain occupies asparagine 29–alanine 76. Positions glutamine 288–isoleucine 405 constitute a Cyclin N-terminal domain. 4 consecutive short sequence motifs (d box) follow at residues arginine 310–leucine 313, arginine 343–leucine 346, arginine 349–leucine 352, and arginine 351–leucine 354. Disordered stretches follow at residues serine 564–leucine 593 and threonine 675–proline 738. Residues arginine 568 to arginine 574 carry the Nuclear localization signal 2 motif. The segment at arginine 582–lysine 766 is PEST. A compositionally biased stretch (low complexity) spans valine 697–valine 714. The segment covering glutamine 723–proline 738 has biased composition (polar residues). The D box 5 motif lies at arginine 767 to leucine 770.

The protein belongs to the cyclin family. Cyclin AB subfamily. As to quaternary structure, component of the SCF(CCNF) complex consisting of CUL1, RBX1, SKP1 and CCNF. Interacts with SKP1. Interacts with CUL1. Interacts with CCNB1; interaction is required for nuclear localization of CCNB1. Interacts with CCP110; this interaction leads to CCP110 ubiquitination and degradation via the proteasome pathway. Interacts (via the Cyclin N-terminal domain) with MYBL2/BMYB. Interacts with FZR1/CDH1 (via N-terminus). Interacts with RRM2 (via Cy motif and when phosphorylated at 'Thr-33'); the interaction occurs exclusively in G2 and early M. Interacts with CDC6 (via Cy motif); the interaction takes place during G2 and M phase. Degraded when the spindle assembly checkpoint is activated during the G2-M transition. Degradation depends on the C-terminal PEST sequence. Post-translationally, phosphorylated just before cells enter into mitosis. In terms of processing, ubiquitinated by the anaphase-promoting complex (APC/C); leading to its degradation by the proteasome. As to expression, widely expressed, with expression detected in the heart, brain, placenta, lung, liver, skeletal muscle, kidney and pancreas.

It localises to the nucleus. It is found in the cytoplasm. Its subcellular location is the perinuclear region. The protein resides in the cytoskeleton. The protein localises to the microtubule organizing center. It localises to the centrosome. It is found in the centriole. Its function is as follows. Substrate recognition component of a SCF (SKP1-CUL1-F-box protein) E3 ubiquitin-protein ligase complex which mediates the ubiquitination and subsequent proteasomal degradation of target proteins. The SCF(CCNF) E3 ubiquitin-protein ligase complex is an integral component of the ubiquitin proteasome system (UPS) and links proteasome degradation to the cell cycle. Mediates the substrate recognition and the proteasomal degradation of various target proteins involved in the regulation of cell cycle progression and in the maintenance of genome stability. Mediates the ubiquitination and proteasomal degradation of CP110 during G2 phase, thereby acting as an inhibitor of centrosome reduplication. In G2, mediates the ubiquitination and subsequent degradation of ribonucleotide reductase RRM2, thereby maintaining a balanced pool of dNTPs and genome integrity. In G2, mediates the ubiquitination and proteasomal degradation of CDC6, thereby suppressing DNA re-replication and preventing genome instability. Involved in the ubiquitination and degradation of the substrate adapter CDH1 of the anaphase-promoting complex (APC/C), thereby acting as an antagonist of APC/C in regulating G1 progression and S phase entry. May play a role in the G2 cell cycle checkpoint control after DNA damage, possibly by promoting the ubiquitination of MYBL2/BMYB. The sequence is that of Cyclin-F (CCNF) from Homo sapiens (Human).